Here is an 88-residue protein sequence, read N- to C-terminus: HssA/B-like protein 12 (88 aa).

The protein belongs to the hssA/B family.

This is HssA/B-like protein 12 (hssl12) from Dictyostelium discoideum (Social amoeba).